Consider the following 496-residue polypeptide: UDP-N-acetylmuramoyl-L-alanyl-D-glutamate--2,6-diaminopimelate ligase (496 aa).

UDP-N-acetyl-alpha-D-muramoyl-L-alanyl-D-glutamate-binding residues include Leu-29 and Ser-31. Residue 118–124 (GTNGKTT) coordinates ATP. UDP-N-acetyl-alpha-D-muramoyl-L-alanyl-D-glutamate-binding positions include Asn-159, 160-161 (TT), Ser-187, Gln-193, and Arg-195. Lys-227 is modified (N6-carboxylysine). Meso-2,6-diaminopimelate contacts are provided by residues Arg-392, 416 to 419 (DNPR), Gly-467, and Glu-471. Residues 416–419 (DNPR) carry the Meso-diaminopimelate recognition motif motif.

It belongs to the MurCDEF family. MurE subfamily. The cofactor is Mg(2+). Post-translationally, carboxylation is probably crucial for Mg(2+) binding and, consequently, for the gamma-phosphate positioning of ATP.

The protein resides in the cytoplasm. It carries out the reaction UDP-N-acetyl-alpha-D-muramoyl-L-alanyl-D-glutamate + meso-2,6-diaminopimelate + ATP = UDP-N-acetyl-alpha-D-muramoyl-L-alanyl-gamma-D-glutamyl-meso-2,6-diaminopimelate + ADP + phosphate + H(+). It functions in the pathway cell wall biogenesis; peptidoglycan biosynthesis. In terms of biological role, catalyzes the addition of meso-diaminopimelic acid to the nucleotide precursor UDP-N-acetylmuramoyl-L-alanyl-D-glutamate (UMAG) in the biosynthesis of bacterial cell-wall peptidoglycan. This is UDP-N-acetylmuramoyl-L-alanyl-D-glutamate--2,6-diaminopimelate ligase from Wigglesworthia glossinidia brevipalpis.